Consider the following 151-residue polypeptide: Transcriptional repressor NrdR (151 aa).

A zinc finger spans residues 3–34; sequence CPYCGYIEDRVIDSRPTDEGSAIRRRRECSKC. In terms of domain architecture, ATP-cone spans 49–139; sequence IMVIKKDKSR…VYRQFKDINT (91 aa).

The protein belongs to the NrdR family. Zn(2+) is required as a cofactor.

Its function is as follows. Negatively regulates transcription of bacterial ribonucleotide reductase nrd genes and operons by binding to NrdR-boxes. This is Transcriptional repressor NrdR from Acetivibrio thermocellus (strain ATCC 27405 / DSM 1237 / JCM 9322 / NBRC 103400 / NCIMB 10682 / NRRL B-4536 / VPI 7372) (Clostridium thermocellum).